The primary structure comprises 396 residues: MAKAKFERNKPHCNIGTIGHVDHGKTSLTAAITKVLAEAGGATFTAYDQIDKAPEEKARGITISTSHVEYETPNRHYAHVDCPGHADYVKNMITGAAQMDGAILVVSAADGPMPQTREHILLARQVGVPAIVVFLNKCDMVDDPELLELVEMEVRELLSKYDFPGDDIPIIKGSALAVLENSDPKLGHDAVLELMKAVDAYIPQPERPVDQPFLMPVEDVFSISGRGTVVTGRVERGIVKVGEEIEIVGIRPTQKTTVTGVEMFRKLLDQGQAGDNIGALLRGTKREDVERGQVLCKPGSVKPHTKFKAEAYILTKEEGGRHTPFFTNYRPQFYFRTTDVTGVVHLPAGTEMVMPGDNVAMEVHLIVPIAMEEKLRFAIREGGRTVGAGVVASIIE.

One can recognise a tr-type G domain in the interval Lys-10 to Glu-206. Residues Gly-19–Thr-26 are G1. Gly-19–Thr-26 lines the GTP pocket. Thr-26 provides a ligand contact to Mg(2+). A G2 region spans residues Gly-60 to Ser-64. The interval Asp-81–Gly-84 is G3. Residues Asp-81–His-85 and Asn-136–Asp-139 each bind GTP. Positions Asn-136–Asp-139 are G4. Residues Ser-174 to Leu-176 are G5.

This sequence belongs to the TRAFAC class translation factor GTPase superfamily. Classic translation factor GTPase family. EF-Tu/EF-1A subfamily. Monomer.

Its subcellular location is the cytoplasm. It carries out the reaction GTP + H2O = GDP + phosphate + H(+). In terms of biological role, GTP hydrolase that promotes the GTP-dependent binding of aminoacyl-tRNA to the A-site of ribosomes during protein biosynthesis. This chain is Elongation factor Tu, found in Nitrobacter hamburgensis (strain DSM 10229 / NCIMB 13809 / X14).